The following is a 609-amino-acid chain: Proteasome-associated ATPase (609 aa).

Residues 1 to 22 (MGESERSEAFNPPREAGMSSGD) are disordered. Positions 20–96 (SGDIAELEQL…LREEVDRLGQ (77 aa)) form a coiled coil. 296-301 (GCGKTL) contributes to the ATP binding site. The segment at 608-609 (YL) is docks into pockets in the proteasome alpha-ring.

The protein belongs to the AAA ATPase family. As to quaternary structure, homohexamer. Assembles into a hexameric ring structure that caps the 20S proteasome core. Strongly interacts with the prokaryotic ubiquitin-like protein Pup through a hydrophobic interface; the interacting region of ARC lies in its N-terminal coiled-coil domain. There is one Pup binding site per ARC hexamer ring. Upon ATP-binding, the C-terminus of ARC interacts with the alpha-rings of the proteasome core, possibly by binding to the intersubunit pockets.

The protein operates within protein degradation; proteasomal Pup-dependent pathway. Functionally, ATPase which is responsible for recognizing, binding, unfolding and translocation of pupylated proteins into the bacterial 20S proteasome core particle. May be essential for opening the gate of the 20S proteasome via an interaction with its C-terminus, thereby allowing substrate entry and access to the site of proteolysis. Thus, the C-termini of the proteasomal ATPase may function like a 'key in a lock' to induce gate opening and therefore regulate proteolysis. The protein is Proteasome-associated ATPase of Mycobacterium leprae (strain Br4923).